A 59-amino-acid chain; its full sequence is Large ribosomal subunit protein uL30 (59 aa).

The protein belongs to the universal ribosomal protein uL30 family. Part of the 50S ribosomal subunit.

This is Large ribosomal subunit protein uL30 from Staphylococcus haemolyticus (strain JCSC1435).